A 264-amino-acid polypeptide reads, in one-letter code: MSDILQTILARKAEEVAQRRAQRPLEELQAAVASAPPVRGFVRALQAAVANGDPAVIAEVKKASPSKGVIRPDFRPADIAVSYEFGGASCLSVLTDVDFFQGADAYLQQAREACTLPVLRKDFVIDAYQVYEARVLGADCILLIVAALDDTQLATLSELALSLGMDVLVEVHDIDELERALQVPAPMIGINNRNLRTFEVSLQTTLDMQQAVPRDRLLVTESGILGLQDVALMRDAGIHAFLVGEAFMRVEEPGEGLRQLFFAA.

The protein belongs to the TrpC family.

It catalyses the reaction 1-(2-carboxyphenylamino)-1-deoxy-D-ribulose 5-phosphate + H(+) = (1S,2R)-1-C-(indol-3-yl)glycerol 3-phosphate + CO2 + H2O. Its pathway is amino-acid biosynthesis; L-tryptophan biosynthesis; L-tryptophan from chorismate: step 4/5. The polypeptide is Indole-3-glycerol phosphate synthase (Stenotrophomonas maltophilia (strain K279a)).